The following is an 88-amino-acid chain: Acylphosphatase (88 aa).

The Acylphosphatase-like domain occupies Ala-3–Gly-88. Catalysis depends on residues Arg-18 and Asn-36.

It belongs to the acylphosphatase family.

It carries out the reaction an acyl phosphate + H2O = a carboxylate + phosphate + H(+). This is Acylphosphatase (acyP) from Xanthomonas oryzae pv. oryzae (strain MAFF 311018).